Consider the following 88-residue polypeptide: UPF0250 protein Shal_3239 (88 aa).

The protein belongs to the UPF0250 family.

The protein is UPF0250 protein Shal_3239 of Shewanella halifaxensis (strain HAW-EB4).